The sequence spans 443 residues: Proline--tRNA ligase (443 aa).

This sequence belongs to the class-II aminoacyl-tRNA synthetase family. ProS type 2 subfamily. As to quaternary structure, homodimer.

Its subcellular location is the cytoplasm. It carries out the reaction tRNA(Pro) + L-proline + ATP = L-prolyl-tRNA(Pro) + AMP + diphosphate. In terms of biological role, catalyzes the attachment of proline to tRNA(Pro) in a two-step reaction: proline is first activated by ATP to form Pro-AMP and then transferred to the acceptor end of tRNA(Pro). This is Proline--tRNA ligase from Zymomonas mobilis subsp. mobilis (strain ATCC 10988 / DSM 424 / LMG 404 / NCIMB 8938 / NRRL B-806 / ZM1).